The primary structure comprises 1138 residues: uncharacterized protein (1138 aa).

Disordered stretches follow at residues 985-1015 (EKKLPTHETNSEIEKEKHSDGKRKESKMAQE) and 1094-1138 (LVAT…QNKL). The segment covering 1110 to 1138 (DDDEYEKYDSGIEDIETDVDEEEEVQNKL) has biased composition (acidic residues).

This is an uncharacterized protein from Ostreid herpesvirus 1 (isolate France) (OsHV-1).